The sequence spans 442 residues: tRNA(Ile)-lysidine synthase (442 aa).

27–32 (SGGLDS) is a binding site for ATP.

It belongs to the tRNA(Ile)-lysidine synthase family.

It localises to the cytoplasm. It catalyses the reaction cytidine(34) in tRNA(Ile2) + L-lysine + ATP = lysidine(34) in tRNA(Ile2) + AMP + diphosphate + H(+). Its function is as follows. Ligates lysine onto the cytidine present at position 34 of the AUA codon-specific tRNA(Ile) that contains the anticodon CAU, in an ATP-dependent manner. Cytidine is converted to lysidine, thus changing the amino acid specificity of the tRNA from methionine to isoleucine. The sequence is that of tRNA(Ile)-lysidine synthase from Photorhabdus laumondii subsp. laumondii (strain DSM 15139 / CIP 105565 / TT01) (Photorhabdus luminescens subsp. laumondii).